A 360-amino-acid chain; its full sequence is DNA replication and repair protein RecF (360 aa).

30 to 37 lines the ATP pocket; the sequence is GHNGSGKT.

It belongs to the RecF family.

It localises to the cytoplasm. Its function is as follows. The RecF protein is involved in DNA metabolism; it is required for DNA replication and normal SOS inducibility. RecF binds preferentially to single-stranded, linear DNA. It also seems to bind ATP. The sequence is that of DNA replication and repair protein RecF from Shewanella sediminis (strain HAW-EB3).